Consider the following 448-residue polypeptide: Putative carbonic anhydrase 2 (448 aa).

Positions 1–222 (AYRQTENLLY…PAERDVFRII (222 aa)) constitute an Alpha-carbonic anhydrase domain. His-19 lines the Zn(2+) pocket. N-linked (GlcNAc...) asparagine glycans are attached at residues Asn-139 and Asn-198. Residues 229-448 (RREEDDERGD…DKGDDKGDDN (220 aa)) form a disordered region. Positions 245-280 (DDDDNYDDDDYYNDDYSNDDYYDDDYYYDDYDDDTD) are enriched in acidic residues. 2 stretches are compositionally biased toward basic and acidic residues: residues 281-334 (DDHK…DDSG) and 342-354 (RDGR…RDRN). Asn-314 carries an N-linked (GlcNAc...) asparagine glycan. A compositionally biased stretch (gly residues) spans 357–368 (NGNGRENGGVRG). Residues 370–379 (GNDRDGRRDN) are compositionally biased toward basic and acidic residues. A glycan (N-linked (GlcNAc...) asparagine) is linked at Asn-385. Residues 386–421 (GTRRGNGDDRGGRRNEDRGENRRGKDDQERESEDGR) show a composition bias toward basic and acidic residues. Positions 422–435 (RRRRRFNGRRRRRG) are enriched in basic residues. Over residues 436-448 (RGDDKGDDKGDDN) the composition is skewed to basic and acidic residues.

It belongs to the alpha-carbonic anhydrase family. In terms of tissue distribution, component of the acid-insoluble and acid-soluble organic matrix of calcified layers of the shell (at protein level).

It localises to the secreted. It catalyses the reaction hydrogencarbonate + H(+) = CO2 + H2O. Its function is as follows. Reversible hydration of carbon dioxide. This chain is Putative carbonic anhydrase 2, found in Lottia gigantea (Giant owl limpet).